A 362-amino-acid polypeptide reads, in one-letter code: MNTEASQDQTVTETPGVRLRQARESLGLTQQTVAERLCLKVSTIRDIEEDNAQANLASTFHRGYIRSYAKLVHLPEDELLPILEKQAPVRAAKVAPMQSFSLGKKHKKRDGWLMSFTWLIVLVVLGLTGAWWWQNHQAQQAEIANMVDQSSAQLSQNGGQPVPLTDDNSDAIAPTDAPAPVANGQPVPLTNHSTSAVTNSATTSSATTSSVPTTSSVPKTTLVPKTNSTEPVDTANTNTTMHQEGAASAAVSPSQVPQPGLSTGPSPLPTADAGVSGSTSSVGALVMNFTADCWLQVVDATGKTLFSGIQKGGAVLNLAGKAPYKLTIGAPGALTISYQGNPVDLSKFIKANRVARLTVGVE.

Residues 1 to 111 lie on the Cytoplasmic side of the membrane; sequence MNTEASQDQT…LGKKHKKRDG (111 aa). The HTH cro/C1-type domain maps to 19-79; sequence LRQARESLGL…KLVHLPEDEL (61 aa). Residues 30–49 constitute a DNA-binding region (H-T-H motif); sequence QQTVAERLCLKVSTIRDIEE. Residues 112 to 132 form a helical; Signal-anchor for type II membrane protein membrane-spanning segment; the sequence is WLMSFTWLIVLVVLGLTGAWW. Residues 133 to 362 are Periplasmic-facing; sequence WQNHQAQQAE…RVARLTVGVE (230 aa). The interval 151–277 is disordered; sequence SAQLSQNGGQ…LPTADAGVSG (127 aa). Residues 193–221 show a composition bias toward low complexity; that stretch reads STSAVTNSATTSSATTSSVPTTSSVPKTT. Residues 223–242 show a composition bias toward polar residues; the sequence is VPKTNSTEPVDTANTNTTMH. Over residues 246-259 the composition is skewed to low complexity; sequence AASAAVSPSQVPQP.

The protein belongs to the RodZ family.

The protein localises to the cell inner membrane. Its function is as follows. Cytoskeletal protein that is involved in cell-shape control through regulation of the length of the long axis. The chain is Cytoskeleton protein RodZ from Yersinia pseudotuberculosis serotype IB (strain PB1/+).